The following is a 457-amino-acid chain: Bifunctional protein GlmU (457 aa).

The pyrophosphorylase stretch occupies residues 1-230; that stretch reads MPLSLPLHIV…AQEVEGVNDL (230 aa). UDP-N-acetyl-alpha-D-glucosamine is bound by residues 12–15, lysine 26, glutamine 78, 83–84, 105–107, glycine 140, glutamate 155, asparagine 170, and asparagine 228; these read LAAG, GT, and YGD. Mg(2+) is bound at residue aspartate 107. Residue asparagine 228 coordinates Mg(2+). The segment at 231–251 is linker; it reads WQLTQLERAWQIRAARALCLQ. Residues 252 to 457 are N-acetyltransferase; the sequence is GARVADPARL…DGWQRPKKKT (206 aa). Residues arginine 334 and lysine 352 each coordinate UDP-N-acetyl-alpha-D-glucosamine. Histidine 364 (proton acceptor) is an active-site residue. UDP-N-acetyl-alpha-D-glucosamine contacts are provided by tyrosine 367 and asparagine 378. Residues alanine 381, 387–388, serine 406, alanine 424, and arginine 441 contribute to the acetyl-CoA site; that span reads NY.

In the N-terminal section; belongs to the N-acetylglucosamine-1-phosphate uridyltransferase family. It in the C-terminal section; belongs to the transferase hexapeptide repeat family. Homotrimer. Mg(2+) is required as a cofactor.

It localises to the cytoplasm. The enzyme catalyses alpha-D-glucosamine 1-phosphate + acetyl-CoA = N-acetyl-alpha-D-glucosamine 1-phosphate + CoA + H(+). The catalysed reaction is N-acetyl-alpha-D-glucosamine 1-phosphate + UTP + H(+) = UDP-N-acetyl-alpha-D-glucosamine + diphosphate. Its pathway is nucleotide-sugar biosynthesis; UDP-N-acetyl-alpha-D-glucosamine biosynthesis; N-acetyl-alpha-D-glucosamine 1-phosphate from alpha-D-glucosamine 6-phosphate (route II): step 2/2. It functions in the pathway nucleotide-sugar biosynthesis; UDP-N-acetyl-alpha-D-glucosamine biosynthesis; UDP-N-acetyl-alpha-D-glucosamine from N-acetyl-alpha-D-glucosamine 1-phosphate: step 1/1. The protein operates within bacterial outer membrane biogenesis; LPS lipid A biosynthesis. Its function is as follows. Catalyzes the last two sequential reactions in the de novo biosynthetic pathway for UDP-N-acetylglucosamine (UDP-GlcNAc). The C-terminal domain catalyzes the transfer of acetyl group from acetyl coenzyme A to glucosamine-1-phosphate (GlcN-1-P) to produce N-acetylglucosamine-1-phosphate (GlcNAc-1-P), which is converted into UDP-GlcNAc by the transfer of uridine 5-monophosphate (from uridine 5-triphosphate), a reaction catalyzed by the N-terminal domain. The protein is Bifunctional protein GlmU of Xylella fastidiosa (strain M23).